Here is a 264-residue protein sequence, read N- to C-terminus: Catenin delta-2 (264 aa).

ARM repeat units follow at residues 20-59 (NKIK…NLVY), 64-104 (DDNK…NLSS), 120-162 (LTNA…NVSS), and 166-211 (EARR…NLSY). The disordered stretch occupies residues 238-264 (GKDAESSGCWGKKKKKKKSQDQWDGVG).

It belongs to the beta-catenin family. As to quaternary structure, binds to E-cadherin at a juxtamembrane site within the cytoplasmic domain. Binds to PSEN1. Interacts with ZBTB33. Interacts with ARHGEF28. Interacts (via the extreme C-terminus) with FRMPD2 (via the PDZ 2 domain). Interacts with PDZD2. Interacts with CDK5. Interacts with CTNBB1. Interacts with GSK3A and GSK3B. Interacts with DNM2. Interacts with CCDC85B. O-glycosylated. In terms of processing, phosphorylated by CDK5. Phosphorylated by GSK3B. As to expression, predominantly expressed in brain; accumulates in cortical neurons (at protein level).

The protein resides in the nucleus. It localises to the cell junction. The protein localises to the adherens junction. It is found in the cell projection. Its subcellular location is the dendrite. The protein resides in the perikaryon. Functionally, has a critical role in neuronal development, particularly in the formation and/or maintenance of dendritic spines and synapses. Involved in the regulation of canonical Wnt signaling. It probably acts on beta-catenin turnover, facilitating beta-catenin interaction with GSK3B, phosphorylation, ubiquitination and degradation. May be involved in neuronal cell adhesion and tissue morphogenesis and integrity by regulating adhesion molecules. Functions as a transcriptional activator when bound to ZBTB33. This Rattus norvegicus (Rat) protein is Catenin delta-2 (Ctnnd2).